Reading from the N-terminus, the 105-residue chain is Pyrimidine/purine nucleoside phosphorylase (105 aa).

This sequence belongs to the nucleoside phosphorylase PpnP family.

It catalyses the reaction a purine D-ribonucleoside + phosphate = a purine nucleobase + alpha-D-ribose 1-phosphate. The enzyme catalyses adenosine + phosphate = alpha-D-ribose 1-phosphate + adenine. It carries out the reaction cytidine + phosphate = cytosine + alpha-D-ribose 1-phosphate. The catalysed reaction is guanosine + phosphate = alpha-D-ribose 1-phosphate + guanine. It catalyses the reaction inosine + phosphate = alpha-D-ribose 1-phosphate + hypoxanthine. The enzyme catalyses thymidine + phosphate = 2-deoxy-alpha-D-ribose 1-phosphate + thymine. It carries out the reaction uridine + phosphate = alpha-D-ribose 1-phosphate + uracil. The catalysed reaction is xanthosine + phosphate = alpha-D-ribose 1-phosphate + xanthine. Its function is as follows. Catalyzes the phosphorolysis of diverse nucleosides, yielding D-ribose 1-phosphate and the respective free bases. Can use uridine, adenosine, guanosine, cytidine, thymidine, inosine and xanthosine as substrates. Also catalyzes the reverse reactions. The polypeptide is Pyrimidine/purine nucleoside phosphorylase (Ralstonia pickettii (strain 12J)).